A 371-amino-acid chain; its full sequence is Poly(rC)-binding protein 3 (371 aa).

KH domains lie at 45–95, 129–182, and 293–357; these read TLTI…TITG, PVTL…TISG, and ASTH…QYLI.

It localises to the cytoplasm. Functionally, single-stranded nucleic acid binding protein that binds preferentially to oligo dC. The polypeptide is Poly(rC)-binding protein 3 (Homo sapiens (Human)).